The following is a 21-amino-acid chain: Fibrinogen beta chain (21 aa).

Pyrrolidone carboxylic acid is present on Gln1. Residues 1-11 (QHSTDYDEVED) show a composition bias toward acidic residues. The disordered stretch occupies residues 1–21 (QHSTDYDEVEDDRAKLHLDAR). O-linked (GalNAc...) threonine glycosylation is present at Thr4. Tyr6 bears the Sulfotyrosine mark. Residues 12 to 21 (DRAKLHLDAR) are compositionally biased toward basic and acidic residues.

As to quaternary structure, heterohexamer; disulfide linked. Contains 2 sets of 3 non-identical chains (alpha, beta and gamma). The 2 heterotrimers are in head to head conformation with the N-termini in a small central domain. In terms of processing, conversion of fibrinogen to fibrin is triggered by thrombin, which cleaves fibrinopeptides A and B from alpha and beta chains, and thus exposes the N-terminal polymerization sites responsible for the formation of the soft clot.

Its subcellular location is the secreted. In terms of biological role, cleaved by the protease thrombin to yield monomers which, together with fibrinogen alpha (FGA) and fibrinogen gamma (FGG), polymerize to form an insoluble fibrin matrix. Fibrin has a major function in hemostasis as one of the primary components of blood clots. In addition, functions during the early stages of wound repair to stabilize the lesion and guide cell migration during re-epithelialization. Was originally thought to be essential for platelet aggregation, based on in vitro studies using anticoagulated blood. However subsequent studies have shown that it is not absolutely required for thrombus formation in vivo. Enhances expression of SELP in activated platelets. Maternal fibrinogen is essential for successful pregnancy. Fibrin deposition is also associated with infection, where it protects against IFNG-mediated hemorrhage. May also facilitate the antibacterial immune response via both innate and T-cell mediated pathways. The polypeptide is Fibrinogen beta chain (FGB) (Muntiacus muntjak (Barking deer)).